A 545-amino-acid polypeptide reads, in one-letter code: Threonine--tRNA ligase catalytic subunit (545 aa).

Residues 139 to 433 (DHRLIGEKLD…LLEHFKGKLP (295 aa)) are catalytic. 3 residues coordinate Zn(2+): C231, H282, and H410.

The protein belongs to the class-II aminoacyl-tRNA synthetase family. As to quaternary structure, homodimer. Probably interacts with its editing subunit. It depends on Zn(2+) as a cofactor.

The protein localises to the cytoplasm. The catalysed reaction is tRNA(Thr) + L-threonine + ATP = L-threonyl-tRNA(Thr) + AMP + diphosphate + H(+). Catalyzes the attachment of threonine to tRNA(Thr) in a two-step reaction: L-threonine is first activated by ATP to form Thr-AMP and then transferred to the acceptor end of tRNA(Thr). Also activates L-serine and transfers it to tRNA(Thr) but cannot deacylate incorrectly charged amino acid; unlike most archaea the editing function is found in a freestanding protein. The protein is Threonine--tRNA ligase catalytic subunit of Saccharolobus islandicus (strain M.16.4 / Kamchatka #3) (Sulfolobus islandicus).